Here is a 173-residue protein sequence, read N- to C-terminus: Large ribosomal subunit protein uL10 (173 aa).

It belongs to the universal ribosomal protein uL10 family. In terms of assembly, part of the ribosomal stalk of the 50S ribosomal subunit. The N-terminus interacts with L11 and the large rRNA to form the base of the stalk. The C-terminus forms an elongated spine to which L12 dimers bind in a sequential fashion forming a multimeric L10(L12)X complex.

Functionally, forms part of the ribosomal stalk, playing a central role in the interaction of the ribosome with GTP-bound translation factors. The sequence is that of Large ribosomal subunit protein uL10 from Geobacter sp. (strain M21).